A 669-amino-acid polypeptide reads, in one-letter code: Dymeclin (669 aa).

G2 is lipidated: N-myristoyl glycine.

The protein belongs to the dymeclin family. As to quaternary structure, interacts with GOLM1 and PPIB. Myristoylated in vitro; myristoylation is not essential for protein targeting to Golgi compartment.

Its subcellular location is the cytoplasm. It localises to the golgi apparatus. The protein localises to the membrane. Its function is as follows. Necessary for correct organization of Golgi apparatus. Involved in bone development. The protein is Dymeclin (DYM) of Pongo abelii (Sumatran orangutan).